The chain runs to 504 residues: Glutamate--tRNA ligase (504 aa).

The short motif at 10 to 20 is the 'HIGH' region element; it reads PSPTGDPHVGT. The short motif at 251–255 is the 'KMSKS' region element; sequence KLSKR. Lysine 254 is a binding site for ATP.

It belongs to the class-I aminoacyl-tRNA synthetase family. Glutamate--tRNA ligase type 1 subfamily. In terms of assembly, monomer.

Its subcellular location is the cytoplasm. The enzyme catalyses tRNA(Glu) + L-glutamate + ATP = L-glutamyl-tRNA(Glu) + AMP + diphosphate. In terms of biological role, catalyzes the attachment of glutamate to tRNA(Glu) in a two-step reaction: glutamate is first activated by ATP to form Glu-AMP and then transferred to the acceptor end of tRNA(Glu). The polypeptide is Glutamate--tRNA ligase (Cellvibrio japonicus (strain Ueda107) (Pseudomonas fluorescens subsp. cellulosa)).